The following is a 289-amino-acid chain: Putative transmembrane protein ORF111 (289 aa).

Transmembrane regions (helical) follow at residues 1-21 (MIGP…IFML), 112-132 (AIIT…VCIA), 151-171 (IGIT…FIVI), 189-209 (LNIS…TSIL), and 261-281 (YLLT…IGVG).

It is found in the host membrane. The sequence is that of Putative transmembrane protein ORF111 from Ostreid herpesvirus 1 (isolate France) (OsHV-1).